An 837-amino-acid chain; its full sequence is WW domain-containing protein tag-325 (837 aa).

Over residues 1–11 (MTTAVQPSDTT) the composition is skewed to polar residues. The segment at 1 to 66 (MTTAVQPSDT…SNGQNYADDP (66 aa)) is disordered. A compositionally biased stretch (low complexity) spans 33-43 (SESAESSSSSS). Residues 44–61 (QTNVSAANTLPRESNGQN) show a composition bias toward polar residues. Positions 96-129 (RDLLNGWFEYETDVGRTFFFNKETGKSQWIPPRF) constitute a WW domain. Positions 150–161 (TCSFQGSSTSSS) are enriched in low complexity. Disordered stretches follow at residues 150–181 (TCSF…RKSQ), 194–257 (DDVD…STAS), 338–403 (TTSS…EPAE), 548–574 (MRRR…EPRP), and 778–800 (KNKK…TPVQ). Positions 162–181 (EEQKENKMRESLADDDRKSQ) are enriched in basic and acidic residues. The span at 247–257 (PTSSRKASTAS) shows a compositional bias: polar residues. The segment covering 371 to 403 (RCEERRGSGDGREPVRTIRCGDLERSENDEPAE) has biased composition (basic and acidic residues). One can recognise a PH domain in the interval 386 to 505 (RTIRCGDLER…WYKSLEEVVA (120 aa)). Residues 556–569 (SQSAIETVSTSVST) are compositionally biased toward polar residues. One can recognise a Rho-GAP domain in the interval 610 to 827 (STLSAICQHE…YLLESANKFD (218 aa)). A compositionally biased stretch (basic residues) spans 778–788 (KNKKAGKKAKP).

The protein is WW domain-containing protein tag-325 (tag-325) of Caenorhabditis elegans.